The chain runs to 639 residues: Chaperone protein DnaK (639 aa).

The residue at position 198 (Thr-198) is a Phosphothreonine; by autocatalysis. The tract at residues 602–639 (QAKSQAQGGDNADAGKQANATADDVVDAEFEEVKDDKK) is disordered. Residues 625 to 639 (DVVDAEFEEVKDDKK) show a composition bias toward acidic residues.

The protein belongs to the heat shock protein 70 family.

Its function is as follows. Acts as a chaperone. The sequence is that of Chaperone protein DnaK from Shewanella baltica (strain OS195).